We begin with the raw amino-acid sequence, 653 residues long: Biotin biosynthesis bifunctional protein BioWF (653 aa).

Substrate is bound at residue Arg278. Residue 365–366 (GY) coordinates pyridoxal 5'-phosphate. His390 contributes to the substrate binding site. Residues Ser436, 461–464 (DDAH), and 492–495 (TASK) each bind pyridoxal 5'-phosphate. At Lys495 the chain carries N6-(pyridoxal phosphate)lysine.

In the N-terminal section; belongs to the BioW family. This sequence in the C-terminal section; belongs to the class-II pyridoxal-phosphate-dependent aminotransferase family. BioF subfamily. In terms of assembly, homodimer. Mg(2+) serves as cofactor. It depends on pyridoxal 5'-phosphate as a cofactor.

The enzyme catalyses heptanedioate + ATP + CoA = 6-carboxyhexanoyl-CoA + AMP + diphosphate. It catalyses the reaction 6-carboxyhexanoyl-[ACP] + L-alanine + H(+) = (8S)-8-amino-7-oxononanoate + holo-[ACP] + CO2. It functions in the pathway metabolic intermediate metabolism; pimeloyl-CoA biosynthesis; pimeloyl-CoA from pimelate: step 1/1. Its pathway is cofactor biosynthesis; biotin biosynthesis. In terms of biological role, catalyzes both the decarboxylative condensation of pimeloyl-[acyl-carrier protein] and L-alanine to produce 8-amino-7-oxononanoate (AON), [acyl-carrier protein], and carbon dioxide, and the transformation of pimelate into pimeloyl-CoA with concomitant hydrolysis of ATP to AMP. The polypeptide is Biotin biosynthesis bifunctional protein BioWF (Cutibacterium acnes (strain DSM 16379 / KPA171202) (Propionibacterium acnes)).